A 166-amino-acid chain; its full sequence is Large ribosomal subunit protein uL10 (166 aa).

Belongs to the universal ribosomal protein uL10 family. As to quaternary structure, part of the ribosomal stalk of the 50S ribosomal subunit. The N-terminus interacts with L11 and the large rRNA to form the base of the stalk. The C-terminus forms an elongated spine to which L12 dimers bind in a sequential fashion forming a multimeric L10(L12)X complex.

In terms of biological role, forms part of the ribosomal stalk, playing a central role in the interaction of the ribosome with GTP-bound translation factors. This chain is Large ribosomal subunit protein uL10, found in Pseudomonas fluorescens (strain ATCC BAA-477 / NRRL B-23932 / Pf-5).